The primary structure comprises 145 residues: uncharacterized protein (145 aa).

The first 23 residues, 1 to 23 (MSSSNLSSRKTRISAHFLDAAPA), serve as a signal peptide directing secretion. A helical membrane pass occupies residues 123 to 140 (VLLLIIALVFLLFVAIFI).

The protein resides in the membrane. This is an uncharacterized protein from Archaeoglobus fulgidus (strain ATCC 49558 / DSM 4304 / JCM 9628 / NBRC 100126 / VC-16).